The primary structure comprises 154 residues: Ribosomal RNA large subunit methyltransferase H (154 aa).

L70 and G102 together coordinate S-adenosyl-L-methionine.

This sequence belongs to the RNA methyltransferase RlmH family. As to quaternary structure, homodimer.

It is found in the cytoplasm. The enzyme catalyses pseudouridine(1915) in 23S rRNA + S-adenosyl-L-methionine = N(3)-methylpseudouridine(1915) in 23S rRNA + S-adenosyl-L-homocysteine + H(+). Functionally, specifically methylates the pseudouridine at position 1915 (m3Psi1915) in 23S rRNA. In Hyphomonas neptunium (strain ATCC 15444), this protein is Ribosomal RNA large subunit methyltransferase H.